The primary structure comprises 151 residues: Large ribosomal subunit protein bL9 (151 aa).

This sequence belongs to the bacterial ribosomal protein bL9 family.

Its function is as follows. Binds to the 23S rRNA. The chain is Large ribosomal subunit protein bL9 from Acidobacterium capsulatum (strain ATCC 51196 / DSM 11244 / BCRC 80197 / JCM 7670 / NBRC 15755 / NCIMB 13165 / 161).